The following is a 546-amino-acid chain: Zinc finger and BTB domain-containing protein 7A (546 aa).

The BTB domain occupies 34-101 (CDVVILVEGQ…AYTATLTVST (68 aa)). The segment at 189–288 (QEDEEEPDCN…SFVPTGAEAE (100 aa)) is disordered. C2H2-type zinc fingers lie at residues 359–381 (QKCP…IRTH), 387–409 (YECN…MRKH), and 415–437 (YLCQ…MRVH). The C2H2-type 4; atypical zinc finger occupies 443 to 467 (YQCDSCFKTFVRSDHLHRHLKKDGC). Residues 463–546 (KKDGCNGIPS…AAEGSAPGPS (84 aa)) form a disordered region. Low complexity predominate over residues 534–546 (AGGAAEGSAPGPS).

The protein localises to the nucleus. In terms of biological role, transcription factor that represses the transcription of a wide range of genes involved in cell proliferation and differentiation. Directly and specifically binds to the consensus sequence 5'-[GA][CA]GACCCCCCCCC-3' and represses transcription both by regulating the organization of chromatin and through the direct recruitment of transcription factors to gene regulatory regions. May also play a role, independently of its transcriptional activity, in double-strand break repair via classical non-homologous end joining/cNHEJ and in alternative splicing. This is Zinc finger and BTB domain-containing protein 7A from Gallus gallus (Chicken).